The following is a 119-amino-acid chain: Small ribosomal subunit protein bS16 (119 aa).

Residues 96–107 are compositionally biased toward basic residues; the sequence is RKKRRAYRQRRS. The segment at 96 to 119 is disordered; sequence RKKRRAYRQRRSTQREEAAKDATK. The segment covering 108–119 has biased composition (basic and acidic residues); sequence TQREEAAKDATK.

The protein belongs to the bacterial ribosomal protein bS16 family.

In Chlamydia pneumoniae (Chlamydophila pneumoniae), this protein is Small ribosomal subunit protein bS16.